A 101-amino-acid polypeptide reads, in one-letter code: NADH-quinone oxidoreductase subunit K (101 aa).

A run of 3 helical transmembrane segments spans residues L4 to L24, I30 to F50, and F62 to V82.

This sequence belongs to the complex I subunit 4L family. NDH-1 is composed of 14 different subunits. Subunits NuoA, H, J, K, L, M, N constitute the membrane sector of the complex.

The protein resides in the cell inner membrane. It catalyses the reaction a quinone + NADH + 5 H(+)(in) = a quinol + NAD(+) + 4 H(+)(out). Functionally, NDH-1 shuttles electrons from NADH, via FMN and iron-sulfur (Fe-S) centers, to quinones in the respiratory chain. The immediate electron acceptor for the enzyme in this species is believed to be ubiquinone. Couples the redox reaction to proton translocation (for every two electrons transferred, four hydrogen ions are translocated across the cytoplasmic membrane), and thus conserves the redox energy in a proton gradient. This is NADH-quinone oxidoreductase subunit K from Stenotrophomonas maltophilia (strain K279a).